Here is a 151-residue protein sequence, read N- to C-terminus: RNA polymerase-binding transcription factor DksA (151 aa).

Residues 34–54 (EAQLSHFKRILEAWRNQLRDE) are a coiled coil. Cys-114, Cys-117, Cys-135, and Cys-138 together coordinate Zn(2+). The segment at 114–138 (CESCGVEIGIRRLEARPTADLCIDC) adopts a dksA C4-type zinc-finger fold.

This sequence belongs to the DksA family. In terms of assembly, interacts directly with the RNA polymerase.

Its subcellular location is the cytoplasm. In terms of biological role, transcription factor that acts by binding directly to the RNA polymerase (RNAP). Required for negative regulation of rRNA expression and positive regulation of several amino acid biosynthesis promoters. Also required for regulation of fis expression. The polypeptide is RNA polymerase-binding transcription factor DksA (Salmonella typhi).